The primary structure comprises 258 residues: GTP cyclohydrolase FolE2 (258 aa).

It belongs to the GTP cyclohydrolase IV family.

The catalysed reaction is GTP + H2O = 7,8-dihydroneopterin 3'-triphosphate + formate + H(+). Its pathway is cofactor biosynthesis; 7,8-dihydroneopterin triphosphate biosynthesis; 7,8-dihydroneopterin triphosphate from GTP: step 1/1. Functionally, converts GTP to 7,8-dihydroneopterin triphosphate. This is GTP cyclohydrolase FolE2 from Lawsonia intracellularis (strain PHE/MN1-00).